We begin with the raw amino-acid sequence, 336 residues long: Holliday junction branch migration complex subunit RuvB (336 aa).

The segment at methionine 4–tyrosine 185 is large ATPase domain (RuvB-L). ATP is bound by residues leucine 24, arginine 25, glycine 66, lysine 69, threonine 70, threonine 71, glutamate 132–phenylalanine 134, arginine 175, tyrosine 185, and arginine 222. Residue threonine 70 participates in Mg(2+) binding. A small ATPAse domain (RuvB-S) region spans residues threonine 186–glutamine 256. A head domain (RuvB-H) region spans residues lysine 259 to valine 336. Residues arginine 314 and arginine 319 each coordinate DNA.

This sequence belongs to the RuvB family. In terms of assembly, homohexamer. Forms an RuvA(8)-RuvB(12)-Holliday junction (HJ) complex. HJ DNA is sandwiched between 2 RuvA tetramers; dsDNA enters through RuvA and exits via RuvB. An RuvB hexamer assembles on each DNA strand where it exits the tetramer. Each RuvB hexamer is contacted by two RuvA subunits (via domain III) on 2 adjacent RuvB subunits; this complex drives branch migration. In the full resolvosome a probable DNA-RuvA(4)-RuvB(12)-RuvC(2) complex forms which resolves the HJ.

It localises to the cytoplasm. It catalyses the reaction ATP + H2O = ADP + phosphate + H(+). In terms of biological role, the RuvA-RuvB-RuvC complex processes Holliday junction (HJ) DNA during genetic recombination and DNA repair, while the RuvA-RuvB complex plays an important role in the rescue of blocked DNA replication forks via replication fork reversal (RFR). RuvA specifically binds to HJ cruciform DNA, conferring on it an open structure. The RuvB hexamer acts as an ATP-dependent pump, pulling dsDNA into and through the RuvAB complex. RuvB forms 2 homohexamers on either side of HJ DNA bound by 1 or 2 RuvA tetramers; 4 subunits per hexamer contact DNA at a time. Coordinated motions by a converter formed by DNA-disengaged RuvB subunits stimulates ATP hydrolysis and nucleotide exchange. Immobilization of the converter enables RuvB to convert the ATP-contained energy into a lever motion, pulling 2 nucleotides of DNA out of the RuvA tetramer per ATP hydrolyzed, thus driving DNA branch migration. The RuvB motors rotate together with the DNA substrate, which together with the progressing nucleotide cycle form the mechanistic basis for DNA recombination by continuous HJ branch migration. Branch migration allows RuvC to scan DNA until it finds its consensus sequence, where it cleaves and resolves cruciform DNA. In Bacillus thuringiensis (strain Al Hakam), this protein is Holliday junction branch migration complex subunit RuvB.